The primary structure comprises 84 residues: Exodeoxyribonuclease 7 small subunit (84 aa).

It belongs to the XseB family. In terms of assembly, heterooligomer composed of large and small subunits.

It is found in the cytoplasm. It carries out the reaction Exonucleolytic cleavage in either 5'- to 3'- or 3'- to 5'-direction to yield nucleoside 5'-phosphates.. In terms of biological role, bidirectionally degrades single-stranded DNA into large acid-insoluble oligonucleotides, which are then degraded further into small acid-soluble oligonucleotides. The sequence is that of Exodeoxyribonuclease 7 small subunit from Yersinia enterocolitica serotype O:8 / biotype 1B (strain NCTC 13174 / 8081).